The sequence spans 521 residues: Zinc finger and BTB domain-containing protein 18 (521 aa).

Residues 24-91 (CDCTVLVGDA…MYEGKLQFKD (68 aa)) form the BTB domain. A disordered region spans residues 190 to 230 (DSASIPQTGGEAETHTAAAGKTADSPCSSTGSLSHRSATSM). Over residues 197-212 (TGGEAETHTAAAGKTA) the composition is skewed to low complexity. Residues 214 to 230 (SPCSSTGSLSHRSATSM) are compositionally biased toward polar residues. C2H2-type zinc fingers lie at residues 369–391 (FMCP…LSTH), 409–431 (PTCS…ERTH), 437–459 (FTCT…AVVH), and 465–488 (HACK…RKFH).

It belongs to the krueppel C2H2-type zinc-finger protein family. ZBTB18 subfamily.

Its subcellular location is the nucleus. Transcriptional repressor that plays a role in various developmental processes. Specifically binds the consensus DNA sequence 5'-[AC]ACATCTG[GT][AC]-3' which contains the E box core, and acts by recruiting chromatin remodeling multiprotein complexes. The sequence is that of Zinc finger and BTB domain-containing protein 18 (zbtb18) from Xenopus tropicalis (Western clawed frog).